We begin with the raw amino-acid sequence, 409 residues long: Transcription termination factor 3, mitochondrial (409 aa).

Residues 1-64 constitute a mitochondrion transit peptide; the sequence is MALLAQQLSR…KTDRALFSWS (64 aa). The interval 74 to 93 is disordered; that stretch reads RKSSTNSTLLPSVSEQPEKI.

It belongs to the mTERF family.

The protein resides in the mitochondrion. Its function is as follows. Binds promoter DNA and regulates initiation of transcription. Required for normal mitochondrial transcription and translation, and for normal assembly of mitochondrial respiratory complexes. Required for normal mitochondrial function. Maintains 16S rRNA levels and functions in mitochondrial ribosome assembly by regulating the biogenesis of the 39S ribosomal subunit. The sequence is that of Transcription termination factor 3, mitochondrial (Mterf3) from Rattus norvegicus (Rat).